A 399-amino-acid chain; its full sequence is A-type ATP synthase subunit C (399 aa).

The protein belongs to the V-ATPase V0D/AC39 subunit family. In terms of assembly, the A-type ATPase is composed of subunits A(3), B(3), C, D, E(1 or 2), F, H(2), I and K(x).

The protein localises to the cell membrane. Its function is as follows. Component of the A-type ATP synthase that produces ATP from ADP in the presence of a proton gradient across the membrane. The chain is A-type ATP synthase subunit C from Methanocaldococcus jannaschii (strain ATCC 43067 / DSM 2661 / JAL-1 / JCM 10045 / NBRC 100440) (Methanococcus jannaschii).